The sequence spans 344 residues: MQLSDFNFDLPDELIARYPLDTRSASRLLHLDAHGHYHDHAFTDILDLINDGDLLVLNDTKVMKARLKGKRASGGAIEILVERMLDNQIAHCHIKASNTPKAGAELFVGENGIKVTVQGRHENLFVVEFSEPILSVLDRYGQLPIPPYFNREAEEIDTERYQTVFHDPQKIASVAAPTASLHFDQDLLEKLAAKNIQKTFVTLHVGAGTFMPVRTDDIKNHIMHSEWCDVPESTAELIRQTKARGNKVIAVGTTATRALESAAQANGGKIDAWTGDTQIFIYPGYQFCVVDRLITNFHLPESTLLMLVSALSNRNNILSAYEHAVQSKYRFFSYGDAMLIDQAV.

It belongs to the QueA family. Monomer.

The protein resides in the cytoplasm. It carries out the reaction 7-aminomethyl-7-carbaguanosine(34) in tRNA + S-adenosyl-L-methionine = epoxyqueuosine(34) in tRNA + adenine + L-methionine + 2 H(+). Its pathway is tRNA modification; tRNA-queuosine biosynthesis. Its function is as follows. Transfers and isomerizes the ribose moiety from AdoMet to the 7-aminomethyl group of 7-deazaguanine (preQ1-tRNA) to give epoxyqueuosine (oQ-tRNA). This is S-adenosylmethionine:tRNA ribosyltransferase-isomerase from Acinetobacter baylyi (strain ATCC 33305 / BD413 / ADP1).